The chain runs to 527 residues: Baeyer-Villiger monooxygenase (527 aa).

FAD contacts are provided by residues Ser36, Glu56, 64–67, Asp76, Tyr82, and Ile125; that span reads TWRV. 74–76 serves as a coordination point for NADP(+); it reads ACD. NADP(+) contacts are provided by residues 199–205, 222–223, and 308–309; these read TGASAIQ, RT, and KR. An FAD-binding site is contributed by Met415.

Belongs to the FAD-binding monooxygenase family. It depends on FAD as a cofactor.

Functionally, catalyzes a Baeyer-Villiger oxidation reaction, i.e. the insertion of an oxygen atom into a carbon-carbon bond adjacent to a carbonyl, which converts ketones to esters or lactones using NADPH and/or NADH as an electron donor. Thus, can convert bicyclo[3.2.0]hept-2-en-6-one into the oxidative lactone products 2-oxabicyclo[3.3.0]oct-6-en-3-one and 3-oxabicyclo[3.3.0]oct-6-en-2-one. Is also able to catalyze the sulfoxidation of methyl phenyl sulfide (thioanisole). The protein is Baeyer-Villiger monooxygenase of Pseudomonas aeruginosa (strain ATCC 15692 / DSM 22644 / CIP 104116 / JCM 14847 / LMG 12228 / 1C / PRS 101 / PAO1).